The sequence spans 319 residues: Acetyl-coenzyme A carboxylase carboxyl transferase subunit alpha (319 aa).

The 262-residue stretch at 35–296 folds into the CoA carboxyltransferase C-terminal domain; it reads NIDEEVQRLR…KTQLLADLED (262 aa).

It belongs to the AccA family. In terms of assembly, acetyl-CoA carboxylase is a heterohexamer composed of biotin carboxyl carrier protein (AccB), biotin carboxylase (AccC) and two subunits each of ACCase subunit alpha (AccA) and ACCase subunit beta (AccD).

It localises to the cytoplasm. It carries out the reaction N(6)-carboxybiotinyl-L-lysyl-[protein] + acetyl-CoA = N(6)-biotinyl-L-lysyl-[protein] + malonyl-CoA. Its pathway is lipid metabolism; malonyl-CoA biosynthesis; malonyl-CoA from acetyl-CoA: step 1/1. Functionally, component of the acetyl coenzyme A carboxylase (ACC) complex. First, biotin carboxylase catalyzes the carboxylation of biotin on its carrier protein (BCCP) and then the CO(2) group is transferred by the carboxyltransferase to acetyl-CoA to form malonyl-CoA. This chain is Acetyl-coenzyme A carboxylase carboxyl transferase subunit alpha, found in Edwardsiella ictaluri (strain 93-146).